The sequence spans 1055 residues: Type I restriction enzyme HindI endonuclease subunit (1055 aa).

Residues 287–468 (TSEKGDRRIG…QDVFGRYVSI (182 aa)) form the Helicase ATP-binding domain.

Belongs to the HsdR family. In terms of assembly, the type I restriction/modification system is composed of three polypeptides R, M and S; the restriction enzyme has stoichiometry R(2)M(2)S(1) while the methyltransferase is M(2)S(1).

It carries out the reaction Endonucleolytic cleavage of DNA to give random double-stranded fragments with terminal 5'-phosphates, ATP is simultaneously hydrolyzed.. In terms of biological role, the restriction (R) subunit of a type I restriction enzyme that recognizes 5'-RAACN(5)TAG-3' and cleaves a random distance away. Subunit R is required for both nuclease and ATPase activities, but not for modification. After locating a non-methylated recognition site, the enzyme complex serves as a molecular motor that translocates DNA in an ATP-dependent manner until a collision occurs that triggers cleavage. This is Type I restriction enzyme HindI endonuclease subunit from Haemophilus influenzae (strain ATCC 51907 / DSM 11121 / KW20 / Rd).